The sequence spans 461 residues: Phosphoglucosamine mutase (461 aa).

Serine 107 functions as the Phosphoserine intermediate in the catalytic mechanism. Mg(2+)-binding residues include serine 107, aspartate 254, aspartate 256, and aspartate 258. Serine 107 carries the post-translational modification Phosphoserine.

It belongs to the phosphohexose mutase family. Mg(2+) serves as cofactor. Post-translationally, activated by phosphorylation.

It carries out the reaction alpha-D-glucosamine 1-phosphate = D-glucosamine 6-phosphate. Catalyzes the conversion of glucosamine-6-phosphate to glucosamine-1-phosphate. In Bifidobacterium longum (strain DJO10A), this protein is Phosphoglucosamine mutase.